The following is a 200-amino-acid chain: Phospholipase A2 inhibitor LNF2 (200 aa).

The N-terminal stretch at 1–19 is a signal peptide; that stretch reads MKSLHTICLLFIFVARGNS. Disulfide bonds link Cys-22-Cys-46, Cys-25-Cys-32, Cys-39-Cys-67, Cys-73-Cys-94, Cys-95-Cys-100, Cys-118-Cys-143, Cys-136-Cys-165, and Cys-169-Cys-191. N-linked (GlcNAc...) asparagine glycosylation is present at Asn-176.

Belongs to the CNF-like-inhibitor family. As to quaternary structure, occurs as a mixture of oligomers. Tetrameric arrangement appears to be the predominant quaternary structure. Expressed by the liver.

It localises to the secreted. Inhibits the enzymatic activity of phospholipase A2 (PA2). This chain is Phospholipase A2 inhibitor LNF2, found in Lachesis muta muta (Bushmaster).